A 527-amino-acid polypeptide reads, in one-letter code: GMP synthase [glutamine-hydrolyzing] (527 aa).

In terms of domain architecture, Glutamine amidotransferase type-1 spans Lys-4–Asp-202. The Nucleophile role is filled by Cys-81. Catalysis depends on residues His-176 and Glu-178. The region spanning Trp-203–Arg-395 is the GMPS ATP-PPase domain. Position 230 to 236 (Ser-230 to Ser-236) interacts with ATP.

Homodimer.

It catalyses the reaction XMP + L-glutamine + ATP + H2O = GMP + L-glutamate + AMP + diphosphate + 2 H(+). It functions in the pathway purine metabolism; GMP biosynthesis; GMP from XMP (L-Gln route): step 1/1. In terms of biological role, catalyzes the synthesis of GMP from XMP. The sequence is that of GMP synthase [glutamine-hydrolyzing] from Paraburkholderia phytofirmans (strain DSM 17436 / LMG 22146 / PsJN) (Burkholderia phytofirmans).